The primary structure comprises 498 residues: Cytochrome P450 71B24 (498 aa).

A helical membrane pass occupies residues 1–21 (MSILLYFIALLSLIIIKKIKD). Cys442 is a heme binding site.

The protein belongs to the cytochrome P450 family. It depends on heme as a cofactor.

Its subcellular location is the membrane. In Arabidopsis thaliana (Mouse-ear cress), this protein is Cytochrome P450 71B24 (CYP71B24).